The primary structure comprises 559 residues: Protein NRT1/ PTR FAMILY 2.8 (559 aa).

11 consecutive transmembrane segments (helical) span residues 57-77, 92-112, 132-152, 178-198, 206-226, 321-341, 374-394, 404-424, 437-457, 481-501, and 529-549; these read GVFL…LTLA, LLLG…TAAL, KWQL…AGGV, FFNW…TGVV, WVIG…TFVI, LKCV…FILT, VSMI…IPIV, LTLK…VAGF, GSFV…LAGL, VAGA…TLLI, and YFFI…LFAS.

The protein belongs to the major facilitator superfamily. Proton-dependent oligopeptide transporter (POT/PTR) (TC 2.A.17) family. In terms of tissue distribution, expressed in flowers.

Its subcellular location is the membrane. This chain is Protein NRT1/ PTR FAMILY 2.8 (NPF2.8), found in Arabidopsis thaliana (Mouse-ear cress).